Here is a 150-residue protein sequence, read N- to C-terminus: Phosphopantetheine adenylyltransferase (150 aa).

Ser-10 provides a ligand contact to substrate. ATP is bound by residues 10–11 and His-18; that span reads SF. Substrate-binding residues include Lys-42, Thr-74, and Arg-88. ATP is bound by residues 89-91, Glu-99, and 124-130; these read GLR and LAYISSS.

This sequence belongs to the bacterial CoaD family. In terms of assembly, homohexamer. It depends on Mg(2+) as a cofactor.

Its subcellular location is the cytoplasm. The catalysed reaction is (R)-4'-phosphopantetheine + ATP + H(+) = 3'-dephospho-CoA + diphosphate. It participates in cofactor biosynthesis; coenzyme A biosynthesis; CoA from (R)-pantothenate: step 4/5. Its function is as follows. Reversibly transfers an adenylyl group from ATP to 4'-phosphopantetheine, yielding dephospho-CoA (dPCoA) and pyrophosphate. This chain is Phosphopantetheine adenylyltransferase, found in Cytophaga hutchinsonii (strain ATCC 33406 / DSM 1761 / CIP 103989 / NBRC 15051 / NCIMB 9469 / D465).